The following is a 514-amino-acid chain: Membrane-bound lytic murein transglycosylase F (514 aa).

Positions 1–30 (MKKLKINYLFIGILTLLLAAALWPSIPWFG) are cleaved as a signal peptide. The interval 31 to 269 (KTENHIAAIQ…RIEEKYLGHG (239 aa)) is non-LT domain. The LT domain stretch occupies residues 270–514 (DDFDYVDTRS…LFTPQKKEEK (245 aa)). E314 is a catalytic residue.

It in the N-terminal section; belongs to the bacterial solute-binding protein 3 family. The protein in the C-terminal section; belongs to the transglycosylase Slt family.

It localises to the cell outer membrane. It catalyses the reaction Exolytic cleavage of the (1-&gt;4)-beta-glycosidic linkage between N-acetylmuramic acid (MurNAc) and N-acetylglucosamine (GlcNAc) residues in peptidoglycan, from either the reducing or the non-reducing ends of the peptidoglycan chains, with concomitant formation of a 1,6-anhydrobond in the MurNAc residue.. Functionally, murein-degrading enzyme that degrades murein glycan strands and insoluble, high-molecular weight murein sacculi, with the concomitant formation of a 1,6-anhydromuramoyl product. Lytic transglycosylases (LTs) play an integral role in the metabolism of the peptidoglycan (PG) sacculus. Their lytic action creates space within the PG sacculus to allow for its expansion as well as for the insertion of various structures such as secretion systems and flagella. The polypeptide is Membrane-bound lytic murein transglycosylase F (Salmonella choleraesuis (strain SC-B67)).